We begin with the raw amino-acid sequence, 395 residues long: Elongation factor Tu (395 aa).

A tr-type G domain is found at 10–204 (KPHVNIGTIG…TVDSYIPEPA (195 aa)). Residues 19–26 (GHVDHGKT) form a G1 region. 19–26 (GHVDHGKT) lines the GTP pocket. Thr26 is a binding site for Mg(2+). Residues 60-64 (GITIN) are G2. The tract at residues 81 to 84 (DAPG) is G3. Residues 81–85 (DAPGH) and 136–139 (NKTD) contribute to the GTP site. Residues 136–139 (NKTD) are G4. The interval 174-176 (SAL) is G5.

The protein belongs to the TRAFAC class translation factor GTPase superfamily. Classic translation factor GTPase family. EF-Tu/EF-1A subfamily. As to quaternary structure, monomer.

Its subcellular location is the cytoplasm. The enzyme catalyses GTP + H2O = GDP + phosphate + H(+). Its function is as follows. GTP hydrolase that promotes the GTP-dependent binding of aminoacyl-tRNA to the A-site of ribosomes during protein biosynthesis. In Leuconostoc mesenteroides subsp. mesenteroides (strain ATCC 8293 / DSM 20343 / BCRC 11652 / CCM 1803 / JCM 6124 / NCDO 523 / NBRC 100496 / NCIMB 8023 / NCTC 12954 / NRRL B-1118 / 37Y), this protein is Elongation factor Tu.